The following is a 334-amino-acid chain: Glycerol-3-phosphate dehydrogenase [NAD(P)+] 2 (334 aa).

NADPH is bound by residues Trp16, Arg36, Arg37, and Lys110. Sn-glycerol 3-phosphate contacts are provided by Lys110 and Gly140. Ala144 contributes to the NADPH binding site. The sn-glycerol 3-phosphate site is built by Lys195, Asp248, Ser258, Arg259, and Asn260. Residue Lys195 is the Proton acceptor of the active site. NADPH is bound at residue Arg259. NADPH-binding residues include Val282 and Glu284.

The protein belongs to the NAD-dependent glycerol-3-phosphate dehydrogenase family.

The protein localises to the cytoplasm. It carries out the reaction sn-glycerol 3-phosphate + NAD(+) = dihydroxyacetone phosphate + NADH + H(+). It catalyses the reaction sn-glycerol 3-phosphate + NADP(+) = dihydroxyacetone phosphate + NADPH + H(+). Its pathway is membrane lipid metabolism; glycerophospholipid metabolism. Functionally, catalyzes the reduction of the glycolytic intermediate dihydroxyacetone phosphate (DHAP) to sn-glycerol 3-phosphate (G3P), the key precursor for phospholipid synthesis. In Mycobacterium tuberculosis (strain ATCC 25618 / H37Rv), this protein is Glycerol-3-phosphate dehydrogenase [NAD(P)+] 2.